Reading from the N-terminus, the 347-residue chain is NADH-ubiquinone oxidoreductase chain 2 (347 aa).

11 consecutive transmembrane segments (helical) span residues 3-23 (PLIF…VMTT), 25-45 (HWVM…PILM), 59-79 (YFLT…INLT), 96-116 (IIMT…FWVP), 122-142 (VQLS…MSIL), 149-169 (INLD…GWGG), 178-198 (ILAY…VYNP), 201-221 (ALLN…MLMV), 237-257 (MPLL…LPPL), 274-294 (DSMI…YFYM), and 326-346 (LSPL…LALL).

It belongs to the complex I subunit 2 family. Core subunit of respiratory chain NADH dehydrogenase (Complex I) which is composed of 45 different subunits. Interacts with TMEM242.

It localises to the mitochondrion inner membrane. The enzyme catalyses a ubiquinone + NADH + 5 H(+)(in) = a ubiquinol + NAD(+) + 4 H(+)(out). Functionally, core subunit of the mitochondrial membrane respiratory chain NADH dehydrogenase (Complex I) which catalyzes electron transfer from NADH through the respiratory chain, using ubiquinone as an electron acceptor. Essential for the catalytic activity and assembly of complex I. This Nyctimene aello (Broad-striped tube-nosed fruit bat) protein is NADH-ubiquinone oxidoreductase chain 2.